The chain runs to 345 residues: Trace amine-associated receptor 6 (345 aa).

The Extracellular segment spans residues 1–32; the sequence is MGSNSSPPAVLQLCYENVNGSCVKTPYSPGPR. N-linked (GlcNAc...) asparagine glycosylation is present at N19. 2 disulfides stabilise this stretch: C22/C186 and C105/C190. Residues 33 to 53 form a helical membrane-spanning segment; the sequence is VLLYAVFGFGAVLAVFGNLLV. Residues 54-68 are Cytoplasmic-facing; that stretch reads MISILHFKQLHSPTN. Residues 69-89 form a helical membrane-spanning segment; it reads FLIASLACADFWVGVSVMPFS. Residues 90–107 are Extracellular-facing; sequence MVRSIESCWYFGRSFCTF. A helical membrane pass occupies residues 108-128; sequence HTCCDVAFCYSSLFHLSFISI. At 129 to 147 the chain is on the cytoplasmic side; that stretch reads DRYIAVTDPLVYPTKFTVS. A helical transmembrane segment spans residues 148 to 168; the sequence is VSGICISISWILPLAYSGAVF. Over 169–202 the chain is Extracellular; the sequence is YTGVYADGLEEVSDAVNCVGGCQVVVNQNWVLID. The chain crosses the membrane as a helical span at residues 203-223; that stretch reads FLSFLIPTLVMIILYGNIFLV. At 224 to 259 the chain is on the cytoplasmic side; it reads ARQQAKKIETVGNKAESSSESYKARVARRERKAAKT. A helical transmembrane segment spans residues 260 to 276; sequence LGITVVAFMISWLPYSI. The Extracellular portion of the chain corresponds to 277–282; the sequence is DSLVDA. A helical membrane pass occupies residues 283-302; the sequence is FMGFITPAYIYEICVWCAYY. At 303-345 the chain is on the cytoplasmic side; the sequence is NSAMNPLIYALFYPWFKKAIKVIMSGQVFKNSSATMNLFSEQI.

The protein belongs to the G-protein coupled receptor 1 family.

Its subcellular location is the cell membrane. Functionally, olfactory receptor specific for trace amines, such as beta-phenylethylamine (beta-PEA). Trace amine compounds are enriched in animal body fluids and act on trace amine-associated receptors (TAARs) to elicit both intraspecific and interspecific innate behaviors. Beta-PEA-binding causes a conformation change that triggers signaling via G(s)-class of G alpha proteins (GNAL or GNAS). The protein is Trace amine-associated receptor 6 (Taar6) of Rattus norvegicus (Rat).